The primary structure comprises 206 residues: MYKQLDTLLAQAGISLTDQQKQRLLGYVSLLDKWNKAYNLTSVREPRDMLVRHIMDSIVVSPYLQGLRFIDVGTGPGLPGIPLAIVRPDANFTLLDSLGKRVRFLRQVQHELRLDNIEPVQSRVEAFVAEPPFDGVISRAFASLQDMVSWCHHLPAAHHGRFYALKGGVPQDELQSLPAGVSVDQLIRLQVPMLEGERHLVVLKSD.

S-adenosyl-L-methionine contacts are provided by residues Gly73, Leu78, 124–125 (VE), and Arg139.

The protein belongs to the methyltransferase superfamily. RNA methyltransferase RsmG family.

It localises to the cytoplasm. It carries out the reaction guanosine(527) in 16S rRNA + S-adenosyl-L-methionine = N(7)-methylguanosine(527) in 16S rRNA + S-adenosyl-L-homocysteine. Its function is as follows. Specifically methylates the N7 position of guanine in position 527 of 16S rRNA. The chain is Ribosomal RNA small subunit methyltransferase G from Edwardsiella ictaluri (strain 93-146).